The primary structure comprises 545 residues: MESYKPVWLKGAVILAINLIDKGYKPVAVGLGERDFYIDVKSDTSITLDEVKKAINENVLANVPIENNQIVYKGNKVSIIEDKVSISTNLNPKYFEILNISTHHPNPNEQYVRIRGVAFETEEQLKDYLTWLEKAEETDHRLIGEKLDLFSFHEEAGSGLVLFHPKGQTIRNELIAFMREINDSMGYQEVYTSHVFKTDIWKISGHYTLYRDKLIVFNMEGDEYGVKPMNCPAHILIYKSKPRTYRDLPIRFSEFGHVYRWEKKGELYGLLRVRGFVQDDGHIFLREDQLREEIKMLISKTVEVWHKFGFKDDDIKPYLSTRPDESIGSDELWEKATNALISALQESGLKFGIKEKEGAFYGPKIDFEIRDSLGRWWQLSTIQVDFNLPERFKLEYIDKDGIKKRPVMVHRAIYGSIDRFVAILLEHFKGKLPTWLSSVQVRVLPITDEVNEYAEKVLNDMRKRRIRAEIDYAGETLSKRIKNAYDQGVPYILIVGKKEASEGTVTVRARGNIEVRNVKFEKFLELLITEIAQRDVEQTTVKALK.

Positions 139-433 are catalytic; sequence DHRLIGEKLD…LLEHFKGKLP (295 aa). C231, H282, and H410 together coordinate Zn(2+).

The protein belongs to the class-II aminoacyl-tRNA synthetase family. As to quaternary structure, homodimer. Probably interacts with its editing subunit. Zn(2+) serves as cofactor.

It localises to the cytoplasm. It carries out the reaction tRNA(Thr) + L-threonine + ATP = L-threonyl-tRNA(Thr) + AMP + diphosphate + H(+). Functionally, catalyzes the attachment of threonine to tRNA(Thr) in a two-step reaction: L-threonine is first activated by ATP to form Thr-AMP and then transferred to the acceptor end of tRNA(Thr). Also activates L-serine and transfers it to tRNA(Thr) but cannot deacylate incorrectly charged amino acid; unlike most archaea the editing function is found in a freestanding protein. The protein is Threonine--tRNA ligase catalytic subunit of Saccharolobus islandicus (strain M.16.27) (Sulfolobus islandicus).